A 475-amino-acid polypeptide reads, in one-letter code: Histidine--tRNA ligase (475 aa).

The protein belongs to the class-II aminoacyl-tRNA synthetase family. Homodimer.

It localises to the cytoplasm. The catalysed reaction is tRNA(His) + L-histidine + ATP = L-histidyl-tRNA(His) + AMP + diphosphate + H(+). This chain is Histidine--tRNA ligase, found in Flavobacterium johnsoniae (strain ATCC 17061 / DSM 2064 / JCM 8514 / BCRC 14874 / CCUG 350202 / NBRC 14942 / NCIMB 11054 / UW101) (Cytophaga johnsonae).